The primary structure comprises 507 residues: ATP synthase subunit alpha, chloroplastic (507 aa).

170–177 (GDRQTGKT) is a binding site for ATP.

The protein belongs to the ATPase alpha/beta chains family. As to quaternary structure, F-type ATPases have 2 components, CF(1) - the catalytic core - and CF(0) - the membrane proton channel. CF(1) has five subunits: alpha(3), beta(3), gamma(1), delta(1), epsilon(1). CF(0) has four main subunits: a, b, b' and c.

The protein localises to the plastid. It localises to the chloroplast thylakoid membrane. It carries out the reaction ATP + H2O + 4 H(+)(in) = ADP + phosphate + 5 H(+)(out). Functionally, produces ATP from ADP in the presence of a proton gradient across the membrane. The alpha chain is a regulatory subunit. The polypeptide is ATP synthase subunit alpha, chloroplastic (Populus alba (White poplar)).